Consider the following 577-residue polypeptide: Arginine--tRNA ligase (577 aa).

The 'HIGH' region motif lies at 122–132; the sequence is PNVAKEMHVGH.

It belongs to the class-I aminoacyl-tRNA synthetase family. Monomer.

The protein resides in the cytoplasm. It catalyses the reaction tRNA(Arg) + L-arginine + ATP = L-arginyl-tRNA(Arg) + AMP + diphosphate. The protein is Arginine--tRNA ligase of Citrobacter koseri (strain ATCC BAA-895 / CDC 4225-83 / SGSC4696).